The following is a 388-amino-acid chain: Probable mannan endo-1,4-beta-mannosidase A-1 (388 aa).

Positions 1-20 (MKLSPLMALAGLASAQLALA) are cleaved as a signal peptide. Positions 93 and 206 each coordinate substrate. The active-site Proton donor is Glu-207. An N-linked (GlcNAc...) asparagine glycan is attached at Asn-264. Residue Tyr-282 participates in substrate binding. The Nucleophile role is filled by Glu-315. The N-linked (GlcNAc...) asparagine glycan is linked to Asn-335. Trp-345 contacts substrate.

This sequence belongs to the glycosyl hydrolase 5 (cellulase A) family.

The protein localises to the secreted. It catalyses the reaction Random hydrolysis of (1-&gt;4)-beta-D-mannosidic linkages in mannans, galactomannans and glucomannans.. Endo-1,4-mannanase, a crucial enzyme for depolymerization of seed galactomannans and wood galactoglucomannans. This chain is Probable mannan endo-1,4-beta-mannosidase A-1 (manA-1), found in Aspergillus terreus (strain NIH 2624 / FGSC A1156).